A 298-amino-acid chain; its full sequence is Chromatin modification-related protein YNG2 (298 aa).

Positions 20–86 (EVRHLLEEIK…KLVQKLQKEK (67 aa)) form a coiled coil. Polar residues predominate over residues 140 to 158 (GFSDSASATPTPRNGSSAT). Residues 140-206 (GFSDSASATP…EEIEDPLPYE (67 aa)) are disordered. Low complexity predominate over residues 174–188 (VKGASSSSAQSSSAS). The PHD-type zinc-finger motif lies at 237-288 (NLYCFCQRVSFGEMIGCDNEDCKYEWFHWSCVGITSPPKDDEIWYCPDCASK). Cys240, Cys242, Cys253, Cys258, His264, Cys267, Cys282, and Cys285 together coordinate Zn(2+).

This sequence belongs to the ING family. As to quaternary structure, interacts with H3K4me3 and to a lesser extent with H3K4me2. Component of the NuA4 histone acetyltransferase complex.

It localises to the nucleus. Functionally, component of the NuA4 histone acetyltransferase complex which is involved in transcriptional activation of selected genes principally by acetylation of nucleosomal histone H4 and H2A. The NuA4 complex is also involved in DNA repair. Involved in cell cycle progression and meiosis. This is Chromatin modification-related protein YNG2 (YNG2) from Candida albicans (strain SC5314 / ATCC MYA-2876) (Yeast).